The sequence spans 313 residues: Acetyl-coenzyme A carboxylase carboxyl transferase subunit beta (313 aa).

The CoA carboxyltransferase N-terminal domain maps to 24–293 (LWIKCPDSGQ…LETASKSVQP (270 aa)).

The protein belongs to the AccD/PCCB family. Acetyl-CoA carboxylase is a heterohexamer composed of biotin carboxyl carrier protein (AccB), biotin carboxylase (AccC) and two subunits each of ACCase subunit alpha (AccA) and ACCase subunit beta (AccD).

It is found in the cytoplasm. The enzyme catalyses N(6)-carboxybiotinyl-L-lysyl-[protein] + acetyl-CoA = N(6)-biotinyl-L-lysyl-[protein] + malonyl-CoA. It participates in lipid metabolism; malonyl-CoA biosynthesis; malonyl-CoA from acetyl-CoA: step 1/1. Component of the acetyl coenzyme A carboxylase (ACC) complex. Biotin carboxylase (BC) catalyzes the carboxylation of biotin on its carrier protein (BCCP) and then the CO(2) group is transferred by the transcarboxylase to acetyl-CoA to form malonyl-CoA. The chain is Acetyl-coenzyme A carboxylase carboxyl transferase subunit beta from Bradyrhizobium diazoefficiens (strain JCM 10833 / BCRC 13528 / IAM 13628 / NBRC 14792 / USDA 110).